We begin with the raw amino-acid sequence, 623 residues long: Putative chaperone protein ClpB2, chloroplastic (623 aa).

The 123-residue stretch at 1–123 (MNDLKFDPNV…KSEVEKLRGE (123 aa)) folds into the Clp R domain. Repeat stretches follow at residues 6-71 (FDPN…NQSL) and 77-123 (RNLG…LRGE). The interval 129 to 375 (LKTYGTDLVE…HVKAQLDIQP (247 aa)) is i. Residue 172-179 (GEPGVGKT) coordinates ATP. The stretch at 368 to 462 (KAQLDIQPEE…LQEAERQHDV (95 aa)) forms a coiled coil. 571–578 (GPTGVGKT) contributes to the ATP binding site.

The protein belongs to the ClpA/ClpB family.

This is Putative chaperone protein ClpB2, chloroplastic (CLPB2) from Arabidopsis thaliana (Mouse-ear cress).